We begin with the raw amino-acid sequence, 1121 residues long: Linoleate 10R-lipoxygenase (1121 aa).

Residues 1 to 66 (MLRRFSSTFK…NEKKGNSVSP (66 aa)) form a disordered region. The segment covering 22-36 (TASSSSAAVANTNNN) has biased composition (low complexity). Residues 50–61 (SSSDDDRNEKKG) are compositionally biased toward basic and acidic residues. Histidine 253 acts as the Proton acceptor in catalysis. Ca(2+) is bound by residues aspartate 254, serine 269, tyrosine 271, aspartate 273, and serine 275.

The protein belongs to the peroxidase family.

It catalyses the reaction (9Z,12Z)-octadecadienoate + O2 = (8E,10R,12Z)-10-hydroperoxyoctadeca-8,12-dienoate. Its function is as follows. Responsible for the synthesis of various fatty acid-derived oxylipins. Oxidizes linoleic acid primarily to 10R-hydroperoxy-8,12-octadecadienoic acid (10R-HPODE) and, to a lesser extent, 8R-hydroperoxylinoleic acid (8R-HPODE). Also synthesizes 10-hydroxy-octadeca-8,12-dienoic acid (10-HODE) from linoleic acid and primarily 8R-hydroxy-octadeca-9-monoenoic acid (8-HOME, also known as psiB beta) from oleic acid. 8-HOME forms part of psi factor, a mixture of oxylipins that regulates the balance between sexual and asexual spore production. Displays epoxyalcohol synthase activity. Plays a role in the synthesis of prostaglandins which may be required for pathogenicity. This Aspergillus fumigatus (strain ATCC MYA-4609 / CBS 101355 / FGSC A1100 / Af293) (Neosartorya fumigata) protein is Linoleate 10R-lipoxygenase.